The chain runs to 409 residues: MTKISDLPRDLAEEVLSRVPVTYLRAIRFTCKKWNTLTKRRSFTKKLIGQEKAEAKVKEFHAIMTLNSRLHLMSVNLDGIHKDENVESSIKQKGKLISLTVADPDRIVISQVYHCDGLLLCITNEINSRLVVWNPYSGQTRWIEPRTSYREWDIYALGYESKNNAKRSYKILRYLDAYEDMGDMSVEPRTRVCEFEIYSLDTNSWKVIEVTTDWDLCFLHRGVTLKGNTYWFAREKIPPPPRERVIEDIPLGEAEINVEIPSFLLCFDFTIEKFGSRLPLPFRPCVDDTITLSSVREEKLAVLYQRWDITWTGIWISNKIEPNAVSWSKLFFPMGRIRPLEAASGTFFVDEENKLVVLFDKGESILNPTRNTAYIVGEDGYIKPVDLGESVHKYCFPLACSYVPSSVQI.

The region spanning 1-47 (MTKISDLPRDLAEEVLSRVPVTYLRAIRFTCKKWNTLTKRRSFTKKL) is the F-box domain.

This chain is F-box protein At3g17320, found in Arabidopsis thaliana (Mouse-ear cress).